The following is a 637-amino-acid chain: Chaperone protein HtpG (637 aa).

The tract at residues 1-334 is a; substrate-binding; the sequence is MQDVVNSEKL…SSDLPLNISR (334 aa). The interval 335–558 is b; it reads ETLQNNKVIE…DGSMDIRMER (224 aa). Positions 559-637 are c; that stretch reads FLREQKQLNY…MNNVLVKVYQ (79 aa).

Belongs to the heat shock protein 90 family. In terms of assembly, homodimer.

It is found in the cytoplasm. Functionally, molecular chaperone. Has ATPase activity. This Ehrlichia canis (strain Jake) protein is Chaperone protein HtpG.